The following is a 291-amino-acid chain: 4-hydroxy-tetrahydrodipicolinate synthase (291 aa).

A pyruvate-binding site is contributed by Thr44. Residue Tyr132 is the Proton donor/acceptor of the active site. The Schiff-base intermediate with substrate role is filled by Lys160. Ile202 contacts pyruvate.

This sequence belongs to the DapA family. In terms of assembly, homotetramer; dimer of dimers.

It is found in the cytoplasm. The enzyme catalyses L-aspartate 4-semialdehyde + pyruvate = (2S,4S)-4-hydroxy-2,3,4,5-tetrahydrodipicolinate + H2O + H(+). It functions in the pathway amino-acid biosynthesis; L-lysine biosynthesis via DAP pathway; (S)-tetrahydrodipicolinate from L-aspartate: step 3/4. Catalyzes the condensation of (S)-aspartate-beta-semialdehyde [(S)-ASA] and pyruvate to 4-hydroxy-tetrahydrodipicolinate (HTPA). The polypeptide is 4-hydroxy-tetrahydrodipicolinate synthase (Roseobacter denitrificans (strain ATCC 33942 / OCh 114) (Erythrobacter sp. (strain OCh 114))).